Reading from the N-terminus, the 387-residue chain is Deoxyguanosinetriphosphate triphosphohydrolase-like protein (387 aa).

The region spanning 78–209 (RLTHSLEVAQ…ANLADEVAYN (132 aa)) is the HD domain.

The protein belongs to the dGTPase family. Type 2 subfamily.

The polypeptide is Deoxyguanosinetriphosphate triphosphohydrolase-like protein (Ralstonia nicotianae (strain ATCC BAA-1114 / GMI1000) (Ralstonia solanacearum)).